The primary structure comprises 93 residues: Neutrophil cationic peptide 1 type A (93 aa).

The signal sequence occupies residues 1–19; sequence MRTVPLFAACLLLTLMAQA. A propeptide spanning residues 20 to 62 is cleaved from the precursor; the sequence is EPLPRAADHSDTKMKGDREDHVAVISFWEEESTSLEDAGAGAG. 3 disulfide bridges follow: C65-C93, C67-C82, and C72-C92.

Belongs to the alpha-defensin family.

It is found in the secreted. Its function is as follows. Has antibiotic, anti-fungi and antiviral activity. This Cavia porcellus (Guinea pig) protein is Neutrophil cationic peptide 1 type A.